Reading from the N-terminus, the 27-residue chain is Peptide Cn29 (27 aa).

Disulfide bonds link Cys2-Cys23, Cys5-Cys18, and Cys12-Cys25.

Expressed by the venom gland.

Its subcellular location is the secreted. This Centruroides noxius (Mexican scorpion) protein is Peptide Cn29.